We begin with the raw amino-acid sequence, 869 residues long: Bifunctional uridylyltransferase/uridylyl-removing enzyme (869 aa).

The uridylyltransferase stretch occupies residues M1 to P332. Positions L333–L691 are uridylyl-removing. Residues V450 to L572 enclose the HD domain. 2 ACT domains span residues E692–P774 and R798–V869.

It belongs to the GlnD family. It depends on Mg(2+) as a cofactor.

The catalysed reaction is [protein-PII]-L-tyrosine + UTP = [protein-PII]-uridylyl-L-tyrosine + diphosphate. It carries out the reaction [protein-PII]-uridylyl-L-tyrosine + H2O = [protein-PII]-L-tyrosine + UMP + H(+). With respect to regulation, uridylyltransferase (UTase) activity is inhibited by glutamine, while glutamine activates uridylyl-removing (UR) activity. Modifies, by uridylylation and deuridylylation, the PII regulatory proteins (GlnB and homologs), in response to the nitrogen status of the cell that GlnD senses through the glutamine level. Under low glutamine levels, catalyzes the conversion of the PII proteins and UTP to PII-UMP and PPi, while under higher glutamine levels, GlnD hydrolyzes PII-UMP to PII and UMP (deuridylylation). Thus, controls uridylylation state and activity of the PII proteins, and plays an important role in the regulation of nitrogen assimilation and metabolism. This chain is Bifunctional uridylyltransferase/uridylyl-removing enzyme, found in Xanthomonas euvesicatoria pv. vesicatoria (strain 85-10) (Xanthomonas campestris pv. vesicatoria).